Consider the following 307-residue polypeptide: Leucine-rich repeat-containing protein 25 (307 aa).

Positions M1–S20 are cleaved as a signal peptide. Residues Q21 to A168 lie on the Extracellular side of the membrane. N-linked (GlcNAc...) asparagine glycosylation is found at N44 and N56. 2 LRR repeats span residues S63 to E86 and Q87 to C110. 3 N-linked (GlcNAc...) asparagine glycosylation sites follow: N95, N132, and N151. The chain crosses the membrane as a helical span at residues I169–L189. Residues A190–R307 are Cytoplasmic-facing. The disordered stretch occupies residues T205–V249. Positions G211 to G226 are enriched in low complexity. The span at P232–D243 shows a compositional bias: polar residues. Y286 carries the post-translational modification Phosphotyrosine.

Interacts with RIGI. Interacts with SQSTM1. Interacts with p65/RELA; this interaction promotes the degradation of RELA through autophagy.

It is found in the membrane. It localises to the cytoplasm. In terms of biological role, plays a role in the inhibition of RLR-mediated type I interferon signaling pathway by targeting RIGI for autophagic degradation. Interacts specifically with ISG15-associated RIGI to promote interaction between RIGI and the autophagic cargo receptor p62/SQSTM1 to mediate RIGI degradation via selective autophagy. Plays also a role in the inhibition of NF-kappa-B signaling pathway and inflammatory response by promoting the degradation of p65/RELA. In Bos taurus (Bovine), this protein is Leucine-rich repeat-containing protein 25 (LRRC25).